Here is a 352-residue protein sequence, read N- to C-terminus: Ion-translocating oxidoreductase complex subunit D (352 aa).

5 helical membrane-spanning segments follow: residues 20 to 40 (IMLLVLLAAVPGIAAQLRFFG), 42 to 62 (GTLVQILLASVSALLAEALVL), 78 to 109 (ALLTGLLLAVSIPPLAPWWMVVLGTVFAVIIA), 123 to 143 (PAMIGYVVLLISFPVQMTSWL), and 148 to 168 (IAVNIPGFIDAIQVIFSGHTA). At T187 the chain carries FMN phosphoryl threonine. Transmembrane regions (helical) follow at residues 214 to 234 (ILAGAGWQWVNLAWLAGGVWL), 242 to 262 (WHIPLSFLVTLALCATLGWLF), 267 to 287 (LAAPQIHLLSGATMLGAFFIL), and 301 to 318 (LMFGALAGLLVWLIRSFG).

It belongs to the NqrB/RnfD family. In terms of assembly, the complex is composed of six subunits: RsxA, RsxB, RsxC, RsxD, RsxE and RsxG. It depends on FMN as a cofactor.

Its subcellular location is the cell inner membrane. Part of a membrane-bound complex that couples electron transfer with translocation of ions across the membrane. Required to maintain the reduced state of SoxR. The polypeptide is Ion-translocating oxidoreductase complex subunit D (Shigella flexneri).